The sequence spans 252 residues: Pyridoxine 5'-phosphate synthase (252 aa).

Position 12 (Asn12) interacts with 3-amino-2-oxopropyl phosphate. 14–15 provides a ligand contact to 1-deoxy-D-xylulose 5-phosphate; sequence DH. Arg23 lines the 3-amino-2-oxopropyl phosphate pocket. His48 (proton acceptor) is an active-site residue. Residues Arg50 and His55 each coordinate 1-deoxy-D-xylulose 5-phosphate. Glu75 functions as the Proton acceptor in the catalytic mechanism. Thr105 contacts 1-deoxy-D-xylulose 5-phosphate. Catalysis depends on His199, which acts as the Proton donor. Residues Gly200 and 221 to 222 contribute to the 3-amino-2-oxopropyl phosphate site; that span reads GH.

The protein belongs to the PNP synthase family. Homooctamer; tetramer of dimers.

It localises to the cytoplasm. The catalysed reaction is 3-amino-2-oxopropyl phosphate + 1-deoxy-D-xylulose 5-phosphate = pyridoxine 5'-phosphate + phosphate + 2 H2O + H(+). The protein operates within cofactor biosynthesis; pyridoxine 5'-phosphate biosynthesis; pyridoxine 5'-phosphate from D-erythrose 4-phosphate: step 5/5. Functionally, catalyzes the complicated ring closure reaction between the two acyclic compounds 1-deoxy-D-xylulose-5-phosphate (DXP) and 3-amino-2-oxopropyl phosphate (1-amino-acetone-3-phosphate or AAP) to form pyridoxine 5'-phosphate (PNP) and inorganic phosphate. The protein is Pyridoxine 5'-phosphate synthase of Cereibacter sphaeroides (strain ATCC 17029 / ATH 2.4.9) (Rhodobacter sphaeroides).